Consider the following 220-residue polypeptide: Small ribosomal subunit protein uS3 (220 aa).

One can recognise a KH type-2 domain in the interval 39 to 107 (IREHVEGRLK…RVHINISEIK (69 aa)).

The protein belongs to the universal ribosomal protein uS3 family. In terms of assembly, part of the 30S ribosomal subunit. Forms a tight complex with proteins S10 and S14.

Functionally, binds the lower part of the 30S subunit head. Binds mRNA in the 70S ribosome, positioning it for translation. The polypeptide is Small ribosomal subunit protein uS3 (Shouchella clausii (strain KSM-K16) (Alkalihalobacillus clausii)).